The primary structure comprises 153 residues: Methylglyoxal synthase (153 aa).

In terms of domain architecture, MGS-like spans arginine 6–serine 153. Residues histidine 19, lysine 23, threonine 45–threonine 48, and serine 65–glycine 66 contribute to the substrate site. Residue aspartate 71 is the Proton donor/acceptor of the active site. Histidine 98 contacts substrate.

It belongs to the methylglyoxal synthase family.

The enzyme catalyses dihydroxyacetone phosphate = methylglyoxal + phosphate. In terms of biological role, catalyzes the formation of methylglyoxal from dihydroxyacetone phosphate. The sequence is that of Methylglyoxal synthase from Sodalis glossinidius (strain morsitans).